The chain runs to 346 residues: Pyrophosphate--fructose 6-phosphate 1-phosphotransferase (346 aa).

Gly-13 contributes to the diphosphate binding site. Mg(2+) is bound at residue Glu-105. Substrate is bound by residues 127–129 (TID), Arg-164, 171–173 (MGR), Glu-224, Arg-269, and 275–278 (HLQR). The active-site Proton acceptor is the Asp-129.

It belongs to the phosphofructokinase type A (PFKA) family. Mixed-substrate PFK group III subfamily. As to quaternary structure, homodimer. The cofactor is Mg(2+).

The protein localises to the cytoplasm. The catalysed reaction is beta-D-fructose 6-phosphate + diphosphate = beta-D-fructose 1,6-bisphosphate + phosphate + H(+). It functions in the pathway carbohydrate degradation; glycolysis; D-glyceraldehyde 3-phosphate and glycerone phosphate from D-glucose: step 3/4. Non-allosteric. Catalyzes the phosphorylation of D-fructose 6-phosphate, the first committing step of glycolysis. Uses inorganic phosphate (PPi) as phosphoryl donor instead of ATP like common ATP-dependent phosphofructokinases (ATP-PFKs), which renders the reaction reversible, and can thus function both in glycolysis and gluconeogenesis. Consistently, PPi-PFK can replace the enzymes of both the forward (ATP-PFK) and reverse (fructose-bisphosphatase (FBPase)) reactions. The chain is Pyrophosphate--fructose 6-phosphate 1-phosphotransferase from Dictyoglomus thermophilum.